A 180-amino-acid polypeptide reads, in one-letter code: NAD(P)H-quinone oxidoreductase subunit I, chloroplastic (180 aa).

4Fe-4S ferredoxin-type domains lie at 55 to 84 and 95 to 124; these read GRIHFEFDKCIACEVCVRVCPIDLPVVDWR and LNYSIDFGICIFCGNCVEYCPTNCLSMTEE. Residues Cys64, Cys67, Cys70, Cys74, Cys104, Cys107, Cys110, and Cys114 each coordinate [4Fe-4S] cluster.

This sequence belongs to the complex I 23 kDa subunit family. NDH is composed of at least 16 different subunits, 5 of which are encoded in the nucleus. [4Fe-4S] cluster serves as cofactor.

The protein resides in the plastid. The protein localises to the chloroplast thylakoid membrane. The enzyme catalyses a plastoquinone + NADH + (n+1) H(+)(in) = a plastoquinol + NAD(+) + n H(+)(out). It catalyses the reaction a plastoquinone + NADPH + (n+1) H(+)(in) = a plastoquinol + NADP(+) + n H(+)(out). Its function is as follows. NDH shuttles electrons from NAD(P)H:plastoquinone, via FMN and iron-sulfur (Fe-S) centers, to quinones in the photosynthetic chain and possibly in a chloroplast respiratory chain. The immediate electron acceptor for the enzyme in this species is believed to be plastoquinone. Couples the redox reaction to proton translocation, and thus conserves the redox energy in a proton gradient. The sequence is that of NAD(P)H-quinone oxidoreductase subunit I, chloroplastic from Illicium oligandrum (Star anise).